The sequence spans 223 residues: Glycolipid transfer protein 2 (223 aa).

The a ganglioside GM3 (d18:1(4E)) site is built by aspartate 69, asparagine 73, tryptophan 116, and histidine 155.

This sequence belongs to the GLTP family.

Functionally, transfers glycolipids in vitro. The sequence is that of Glycolipid transfer protein 2 from Arabidopsis thaliana (Mouse-ear cress).